A 545-amino-acid polypeptide reads, in one-letter code: Chaperonin GroEL (545 aa).

Residues 30 to 33, Lys-51, 87 to 91, Gly-415, and Asp-496 contribute to the ATP site; these read TLGP and DGTTT. A disordered region spans residues 526 to 545; it reads PEPKAPAGGMPDMGGMGGMM. Residues 536-545 are compositionally biased toward gly residues; it reads PDMGGMGGMM.

The protein belongs to the chaperonin (HSP60) family. In terms of assembly, forms a cylinder of 14 subunits composed of two heptameric rings stacked back-to-back. Interacts with the co-chaperonin GroES.

It localises to the cytoplasm. It carries out the reaction ATP + H2O + a folded polypeptide = ADP + phosphate + an unfolded polypeptide.. Its function is as follows. Together with its co-chaperonin GroES, plays an essential role in assisting protein folding. The GroEL-GroES system forms a nano-cage that allows encapsulation of the non-native substrate proteins and provides a physical environment optimized to promote and accelerate protein folding. The protein is Chaperonin GroEL of Paracoccus denitrificans (strain Pd 1222).